The chain runs to 330 residues: Transcriptional regulatory protein PHO23 (330 aa).

The segment at 139-272 is disordered; it reads EKIESKSNSK…NSNNSRISRP (134 aa). The segment covering 231–254 has biased composition (polar residues); it reads TAVSPSTISTATAVNNGRIGTSTA. Over residues 255–269 the composition is skewed to low complexity; sequence SRGVSSVGNSNNSRI. Residues 280–329 form a PHD-type zinc finger; that stretch reads PLYCYCNQVAYGEMVGCDGADCELEWFHLPCIGLETLPKGKWYCDDCKKK. Zn(2+) is bound by residues C283, C285, C296, C301, H307, C310, C323, and C326.

It belongs to the ING family. Interacts with H3K4me3 and to a lesser extent with H3K4me2. Component of the RPD3C(L) complex composed of at least ASH1, CTI6, DEP1, PHO23, RPD3, RXT2, RXT3, SAP30, SDS3, SIN3, UME1 and UME6.

The protein localises to the nucleus. Component of the RPD3C(L) histone deacetylase complex (HDAC) responsible for the deacetylation of lysine residues on the N-terminal part of the core histones (H2A, H2B, H3 and H4). Histone deacetylation gives a tag for epigenetic repression and plays an important role in transcriptional regulation, cell cycle progression and developmental events. This is Transcriptional regulatory protein PHO23 (PHO23) from Saccharomyces cerevisiae (strain ATCC 204508 / S288c) (Baker's yeast).